Consider the following 396-residue polypeptide: uncharacterized protein (396 aa).

Transmembrane regions (helical) follow at residues 12–32, 48–68, 78–98, 106–126, 138–158, 165–185, 209–229, 242–262, 271–291, 297–317, 338–358, and 362–382; these read LLAL…SVGL, GLTV…LTSL, LLWI…ASSI, VISA…AADI, IMFT…TFIG, FAFM…GILV, LLLL…VFTY, AGTV…GNMI, PIAA…VLTF, AAGL…VPGL, AMNI…GGVI, and IGLI…VILT.

The protein belongs to the major facilitator superfamily.

The protein resides in the cell membrane. This is an uncharacterized protein from Bacillus subtilis (strain 168).